Reading from the N-terminus, the 767-residue chain is Protein SQS1 (767 aa).

The span at 1 to 17 (MAKRHSHYQGSRRRHAR) shows a compositional bias: basic residues. Residues 1–60 (MAKRHSHYQGSRRRHARGSNSKKAGRGNAKGIQGRKIKKKPTPTNSWHNSSIPLGEGDLD) form a disordered region. Residues 42-52 (TPTNSWHNSSI) are compositionally biased toward polar residues. Ser-105 carries the phosphoserine modification. Positions 176–185 (EDSENEDDDS) are enriched in acidic residues. The segment at 176–200 (EDSENEDDDSQNSPSTDHSLSSNES) is disordered. Ser-217, Ser-255, Ser-334, Ser-343, and Ser-345 each carry phosphoserine. Residues 466–493 (YSDIPISDSSDEGDSYEGDSYEDDEDMA) form a disordered region. Residues 474–492 (SSDEGDSYEGDSYEDDEDM) show a composition bias toward acidic residues. Residues 594-656 (GLHIQNIKDE…HTSVVVEKIK (63 aa)) enclose the R3H domain. Residues 720 to 767 (NENIGRRMLEKLGWKSGEGLGIQGNKGISEPIFAKIKKNRSGLRHSES) enclose the G-patch domain.

Belongs to the SQS1 family.

It is found in the cytoplasm. The protein resides in the nucleus. Functionally, may be involved in splicing since overexpression antagonizes the suppression of splicing defects by SPP382 mutants. In Saccharomyces cerevisiae (strain YJM789) (Baker's yeast), this protein is Protein SQS1 (SQS1).